We begin with the raw amino-acid sequence, 433 residues long: Serine carboxypeptidase-like 11 (433 aa).

A signal peptide spans Met1–Ser21. 3 cysteine pairs are disulfide-bonded: Cys80–Cys322, Cys243–Cys257, and Cys281–Cys288. Residue Asn101 is glycosylated (N-linked (GlcNAc...) asparagine). Residue Ser176 is part of the active site. Asn342 carries an N-linked (GlcNAc...) asparagine glycan. Asp358 is an active-site residue. Residue Asn374 is glycosylated (N-linked (GlcNAc...) asparagine). Residue His411 is part of the active site.

The protein belongs to the peptidase S10 family. In terms of tissue distribution, ubiquitous.

It localises to the secreted. In terms of biological role, probable carboxypeptidase. This Arabidopsis thaliana (Mouse-ear cress) protein is Serine carboxypeptidase-like 11 (SCPL11).